The primary structure comprises 378 residues: Putative monoglyceride lipase (378 aa).

Residues 97 to 101 (GHSMG) carry the GXSXG motif. The active-site Nucleophile is the serine 99. Active-site charge relay system residues include aspartate 219 and histidine 249. Residues 276–292 (PSETVKSEQETAVEHPK) are compositionally biased toward basic and acidic residues. Positions 276 to 350 (PSETVKSEQE…TSESTTVPET (75 aa)) are disordered. The segment covering 293–305 (PTATTSAPSASPT) has biased composition (low complexity). Serine 301 carries the phosphoserine modification. Positions 341–350 (TSESTTVPET) are enriched in polar residues.

Belongs to the AB hydrolase superfamily. Monoacylglycerol lipase family.

Its subcellular location is the lipid droplet. It localises to the cytoplasm. It is found in the endoplasmic reticulum. The protein resides in the mitochondrion outer membrane. It carries out the reaction Hydrolyzes glycerol monoesters of long-chain fatty acids.. Its pathway is glycerolipid metabolism; triacylglycerol degradation. Its function is as follows. Converts monoacylglycerides (MAG) to free fatty acids and glycerol. Has a strong preference for monounsaturated monoglycerides. Required for efficient degradation of MAG, short-lived intermediates of glycerolipid metabolism which may also function as lipid signaling molecules. Controls inactivation of the signaling lipid N-palmitoylethanolamine (PEA). Involved in fatty acid ethyl ester (FAEE) catabolism. FAEEs are non-oxidative metabolites of ethanol that are transiently incorporated into lipid droplets (LDs). Their mobilization by LD-resident FAEE hydrolases facilitates a controlled metabolism of these potentially toxic lipid metabolites. The chain is Putative monoglyceride lipase (mgl1) from Schizosaccharomyces pombe (strain 972 / ATCC 24843) (Fission yeast).